A 428-amino-acid chain; its full sequence is Chaperone SurA (428 aa).

Residues 1-19 (MNIWKTLLLGMLVTGSAVS) form the signal peptide. PpiC domains lie at 170–268 (SVEY…KIED) and 277–377 (VTEV…EVLD).

The protein resides in the periplasm. The enzyme catalyses [protein]-peptidylproline (omega=180) = [protein]-peptidylproline (omega=0). Its function is as follows. Chaperone involved in the correct folding and assembly of outer membrane proteins. Recognizes specific patterns of aromatic residues and the orientation of their side chains, which are found more frequently in integral outer membrane proteins. May act in both early periplasmic and late outer membrane-associated steps of protein maturation. The sequence is that of Chaperone SurA from Vibrio vulnificus (strain CMCP6).